The sequence spans 334 residues: tRNA U34 carboxymethyltransferase (334 aa).

Residues K91, W105, K110, G130, 152 to 154 (DPT), 181 to 182 (IE), M196, Y200, and R315 each bind carboxy-S-adenosyl-L-methionine.

It belongs to the class I-like SAM-binding methyltransferase superfamily. CmoB family. As to quaternary structure, homotetramer.

The enzyme catalyses carboxy-S-adenosyl-L-methionine + 5-hydroxyuridine(34) in tRNA = 5-carboxymethoxyuridine(34) in tRNA + S-adenosyl-L-homocysteine + H(+). Functionally, catalyzes carboxymethyl transfer from carboxy-S-adenosyl-L-methionine (Cx-SAM) to 5-hydroxyuridine (ho5U) to form 5-carboxymethoxyuridine (cmo5U) at position 34 in tRNAs. In Klebsiella pneumoniae subsp. pneumoniae (strain ATCC 700721 / MGH 78578), this protein is tRNA U34 carboxymethyltransferase.